Consider the following 250-residue polypeptide: MKFEDLLATNKQVQFAHAATQHYKSVKTPDFLEKDPHHKKFHNADGLNQQGSSTPSTATDANAASTASTHTNTTTFKRHIVAVDDISKMNYEMIKNSPGNVITNANQDEIDISTLKTRLYKDNLYAMNDNFLQAVNDQIVTLNAAEQDQETEDPDLSDDEKIDILTKIQENLLEEYQKLSQKERKWFILKELLLDANVELDLFSNRGRKASHPIAFGAVAIPTNVNANSLAFNRTKRRKINKNGLLENIL.

The segment at 29–70 (PDFLEKDPHHKKFHNADGLNQQGSSTPSTATDANAASTASTH) is disordered. Residues 52–70 (SSTPSTATDANAASTASTH) are compositionally biased toward low complexity. A phosphoserine mark is found at serine 157 and serine 211.

Component of the chromatin-remodeling INO80 complex, at least composed of ARP4, ARP5, ARP8, RVB1, RVB2, TAF14, NHP10, IES1, IES3, IES4, IES6, ACT1, IES2, IES5 and INO80.

The protein resides in the nucleus. Its function is as follows. Probably involved in transcription regulation via its interaction with the INO80 complex, a chromatin-remodeling complex. This is Ino eighty subunit 3 (IES3) from Saccharomyces cerevisiae (strain ATCC 204508 / S288c) (Baker's yeast).